The primary structure comprises 238 residues: MKVSIEEMVQVGMHFGHQSRKWNPKMAPFIYTERNGIHIIDLIQTHAYLKQVSQFLTESSAAGKTILFVGTKKQASGLIAKVALQCNSPYVNQRWLGGMLTNWKTIQTSIKKLNEFDYQEKTGGFDLLSKQEAAQARKEKARLQKYLGGMKHMTTIPDVVVIVGQPDELNAVAECRRLGIRSVTILDTDCDPSLADLFVPANDDSVASIQLILTEFLRSILNGQQMFSEKQQRGKKTA.

This sequence belongs to the universal ribosomal protein uS2 family.

The protein localises to the plastid. It is found in the chloroplast. The polypeptide is Small ribosomal subunit protein uS2c (rps2) (Oltmannsiellopsis viridis (Marine flagellate)).